The sequence spans 102 residues: Urease subunit beta (102 aa).

It belongs to the urease beta subunit family. As to quaternary structure, heterotrimer of UreA (gamma), UreB (beta) and UreC (alpha) subunits. Three heterotrimers associate to form the active enzyme.

The protein resides in the cytoplasm. It carries out the reaction urea + 2 H2O + H(+) = hydrogencarbonate + 2 NH4(+). Its pathway is nitrogen metabolism; urea degradation; CO(2) and NH(3) from urea (urease route): step 1/1. This is Urease subunit beta from Blochmanniella pennsylvanica (strain BPEN).